Here is a 413-residue protein sequence, read N- to C-terminus: L-cysteine:1D-myo-inositol 2-amino-2-deoxy-alpha-D-glucopyranoside ligase (413 aa).

Zn(2+) is bound at residue cysteine 43. L-cysteinyl-5'-AMP contacts are provided by residues 43-46 (CGIT), threonine 58, and 81-83 (NIT). Positions 45–55 (ITPYDATHLGH) match the 'HIGH' region motif. Positions 187–192 (ERGGDP) match the 'ERGGDP' region motif. Tryptophan 227 is a binding site for L-cysteinyl-5'-AMP. Position 231 (cysteine 231) interacts with Zn(2+). 249 to 251 (GND) contacts L-cysteinyl-5'-AMP. Histidine 256 is a binding site for Zn(2+). An L-cysteinyl-5'-AMP-binding site is contributed by valine 283. The short motif at 289 to 293 (KMSKS) is the 'KMSKS' region element.

It belongs to the class-I aminoacyl-tRNA synthetase family. MshC subfamily. As to quaternary structure, monomer. It depends on Zn(2+) as a cofactor.

The enzyme catalyses 1D-myo-inositol 2-amino-2-deoxy-alpha-D-glucopyranoside + L-cysteine + ATP = 1D-myo-inositol 2-(L-cysteinylamino)-2-deoxy-alpha-D-glucopyranoside + AMP + diphosphate + H(+). Catalyzes the ATP-dependent condensation of GlcN-Ins and L-cysteine to form L-Cys-GlcN-Ins. The chain is L-cysteine:1D-myo-inositol 2-amino-2-deoxy-alpha-D-glucopyranoside ligase from Gordonia bronchialis (strain ATCC 25592 / DSM 43247 / BCRC 13721 / JCM 3198 / KCTC 3076 / NBRC 16047 / NCTC 10667) (Rhodococcus bronchialis).